The following is a 74-amino-acid chain: Bacteriocin hiracin-JM79 (74 aa).

Positions 1–30 (MKKKVLKHCVILGILGTCLAGIGTGIKVDA) are cleaved as a signal peptide.

It is found in the secreted. Its function is as follows. Bacteriocin with antibacterial activity against the Gram-positive Listeria, Enterococcus, Propionibacterium, Staphylococcus and some strains of Clostridium, Lactobacillus and Pediococcus. Lacks antibacterial activity against Gram-negative bacteria. The sequence is that of Bacteriocin hiracin-JM79 from Enterococcus hirae.